The primary structure comprises 210 residues: Thiamine-phosphate synthase (210 aa).

Residues 36-40 (QLREK) and Asn68 contribute to the 4-amino-2-methyl-5-(diphosphooxymethyl)pyrimidine site. Mg(2+) is bound by residues Asp69 and Asp88. Ser107 contacts 4-amino-2-methyl-5-(diphosphooxymethyl)pyrimidine. 133–135 (TGS) contacts 2-[(2R,5Z)-2-carboxy-4-methylthiazol-5(2H)-ylidene]ethyl phosphate. Lys136 is a 4-amino-2-methyl-5-(diphosphooxymethyl)pyrimidine binding site. 2-[(2R,5Z)-2-carboxy-4-methylthiazol-5(2H)-ylidene]ethyl phosphate is bound by residues Gly164 and 184 to 185 (IS).

This sequence belongs to the thiamine-phosphate synthase family. The cofactor is Mg(2+).

The catalysed reaction is 2-[(2R,5Z)-2-carboxy-4-methylthiazol-5(2H)-ylidene]ethyl phosphate + 4-amino-2-methyl-5-(diphosphooxymethyl)pyrimidine + 2 H(+) = thiamine phosphate + CO2 + diphosphate. The enzyme catalyses 2-(2-carboxy-4-methylthiazol-5-yl)ethyl phosphate + 4-amino-2-methyl-5-(diphosphooxymethyl)pyrimidine + 2 H(+) = thiamine phosphate + CO2 + diphosphate. It catalyses the reaction 4-methyl-5-(2-phosphooxyethyl)-thiazole + 4-amino-2-methyl-5-(diphosphooxymethyl)pyrimidine + H(+) = thiamine phosphate + diphosphate. Its pathway is cofactor biosynthesis; thiamine diphosphate biosynthesis; thiamine phosphate from 4-amino-2-methyl-5-diphosphomethylpyrimidine and 4-methyl-5-(2-phosphoethyl)-thiazole: step 1/1. Condenses 4-methyl-5-(beta-hydroxyethyl)thiazole monophosphate (THZ-P) and 2-methyl-4-amino-5-hydroxymethyl pyrimidine pyrophosphate (HMP-PP) to form thiamine monophosphate (TMP). This Moorella thermoacetica (strain ATCC 39073 / JCM 9320) protein is Thiamine-phosphate synthase.